A 491-amino-acid chain; its full sequence is Sterol 14-alpha demethylase (491 aa).

A helical transmembrane segment spans residues 20 to 40 (LWMLSTVALLSILVVSVVINV). Residue Cys430 participates in heme binding.

It belongs to the cytochrome P450 family. Requires heme as cofactor.

It is found in the endoplasmic reticulum membrane. It carries out the reaction a 14alpha-methyl steroid + 3 reduced [NADPH--hemoprotein reductase] + 3 O2 = a Delta(14) steroid + formate + 3 oxidized [NADPH--hemoprotein reductase] + 4 H2O + 4 H(+). The enzyme catalyses a 14alpha-methyl steroid + reduced [NADPH--hemoprotein reductase] + O2 = a 14alpha-hydroxymethyl steroid + oxidized [NADPH--hemoprotein reductase] + H2O + H(+). It catalyses the reaction a 14alpha-hydroxymethyl steroid + reduced [NADPH--hemoprotein reductase] + O2 = a 14alpha-formyl steroid + oxidized [NADPH--hemoprotein reductase] + 2 H2O + H(+). The catalysed reaction is a 14alpha-formyl steroid + reduced [NADPH--hemoprotein reductase] + O2 = a Delta(14) steroid + formate + oxidized [NADPH--hemoprotein reductase] + H2O + 2 H(+). It carries out the reaction lanosterol + 3 reduced [NADPH--hemoprotein reductase] + 3 O2 = 4,4-dimethyl-5alpha-cholesta-8,14,24-trien-3beta-ol + formate + 3 oxidized [NADPH--hemoprotein reductase] + 4 H2O + 4 H(+). The enzyme catalyses lanosterol + reduced [NADPH--hemoprotein reductase] + O2 = 32-hydroxylanosterol + oxidized [NADPH--hemoprotein reductase] + H2O + H(+). It catalyses the reaction 32-hydroxylanosterol + reduced [NADPH--hemoprotein reductase] + O2 = 32-oxolanosterol + oxidized [NADPH--hemoprotein reductase] + 2 H2O + H(+). The catalysed reaction is 32-oxolanosterol + reduced [NADPH--hemoprotein reductase] + O2 = 4,4-dimethyl-5alpha-cholesta-8,14,24-trien-3beta-ol + formate + oxidized [NADPH--hemoprotein reductase] + H2O + 2 H(+). It carries out the reaction eburicol + 3 reduced [NADPH--hemoprotein reductase] + 3 O2 = 14-demethyleburicol + formate + 3 oxidized [NADPH--hemoprotein reductase] + 4 H2O + 4 H(+). The enzyme catalyses eburicol + reduced [NADPH--hemoprotein reductase] + O2 = 32-hydroxyeburicol + oxidized [NADPH--hemoprotein reductase] + H2O + H(+). It catalyses the reaction 32-hydroxyeburicol + reduced [NADPH--hemoprotein reductase] + O2 = 32-oxoeburicol + oxidized [NADPH--hemoprotein reductase] + 2 H2O + H(+). The catalysed reaction is 32-oxoeburicol + reduced [NADPH--hemoprotein reductase] + O2 = 14-demethyleburicol + formate + oxidized [NADPH--hemoprotein reductase] + H2O + 2 H(+). Its pathway is steroid biosynthesis; sterol biosynthesis. Functionally, sterol 14alpha-demethylase, encoded by cyp51A, cyp51B and cyp51C, that plays a critical role in the third module of ergosterol biosynthesis pathway, being ergosterol the major sterol component in fungal membranes that participates in a variety of functions. The third module or late pathway involves the ergosterol synthesis itself through consecutive reactions that mainly occur in the endoplasmic reticulum (ER) membrane. In filamentous fungi, during the initial step of this module, lanosterol (lanosta-8,24-dien-3beta-ol) can be metabolized to eburicol. Sterol 14alpha-demethylase catalyzes the three-step oxidative removal of the 14alpha-methyl group (C-32) of both these sterols in the form of formate, and converts eburicol and lanosterol to 14-demethyleburicol (4,4,24-trimethylergosta-8,14,24(28)-trienol) and 4,4-dimethyl-5alpha-cholesta-8,14,24-trien-3beta-ol, respectively, which are further metabolized by other enzymes in the pathway to ergosterol. Can also use substrates not intrinsic to fungi, such as 24,25-dihydrolanosterol (DHL), producing 4,4'-dimethyl-8,14-cholestadien-3-beta-ol, but at lower rates than the endogenous substrates. Its function is as follows. As a target of azole drugs, plays a crucial role in azole susceptibility. The sequence is that of Sterol 14-alpha demethylase from Aspergillus flavus (strain ATCC 200026 / FGSC A1120 / IAM 13836 / NRRL 3357 / JCM 12722 / SRRC 167).